The primary structure comprises 695 residues: Elongation factor G (695 aa).

Positions 12–286 (DKLRNIGIMA…AVIDYLPSPL (275 aa)) constitute a tr-type G domain. Residues 21-28 (AHIDAGKT), 85-89 (DTPGH), and 139-142 (NKMD) each bind GTP.

The protein belongs to the TRAFAC class translation factor GTPase superfamily. Classic translation factor GTPase family. EF-G/EF-2 subfamily.

Its subcellular location is the cytoplasm. Its function is as follows. Catalyzes the GTP-dependent ribosomal translocation step during translation elongation. During this step, the ribosome changes from the pre-translocational (PRE) to the post-translocational (POST) state as the newly formed A-site-bound peptidyl-tRNA and P-site-bound deacylated tRNA move to the P and E sites, respectively. Catalyzes the coordinated movement of the two tRNA molecules, the mRNA and conformational changes in the ribosome. This chain is Elongation factor G, found in Thermotoga sp. (strain RQ2).